We begin with the raw amino-acid sequence, 856 residues long: Envelope glycoprotein gp160 (856 aa).

A signal peptide spans 1 to 32 (MRVKEKYQHLRRWGWRWGTMLLGMLMICSATE). Over 33–684 (KLWVTVYYGV…ITNWLWYIKI (652 aa)) the chain is Extracellular. Cys54 and Cys74 are disulfide-bonded. Residues Asn88, Asn136, Asn141, Asn156, Asn160, Asn186, Asn197, Asn230, Asn234, Asn241, Asn262, Asn276, Asn289, Asn295, Asn301, Asn332, Asn339, and Asn356 are each glycosylated (N-linked (GlcNAc...) asparagine; by host). 5 disulfide bridges follow: Cys119–Cys205, Cys126–Cys196, Cys131–Cys157, Cys218–Cys247, and Cys228–Cys239. A V1 region spans residues 131 to 156 (CTDLKNDTNTNSSSGGMIMEKGEIKN). The V2 stretch occupies residues 157–196 (CSFNISTSIRGKVQKEYAFFYKHDIIPIDNDTTSYTLTSC). The V3 stretch occupies residues 296-330 (CTRPNNNTRKRIRIQRGPGRTFVTIGKIGNMRQAH). A disulfide bond links Cys296 and Cys331. The segment at 364-374 (SSGGDLEIVTH) is CD4-binding loop. Cystine bridges form between Cys378-Cys445 and Cys385-Cys418. Residues 385 to 418 (CNSTQLFNSTWFNSTWSTEGSNNTEGSDTITLPC) are V4. 6 N-linked (GlcNAc...) asparagine; by host glycosylation sites follow: Asn386, Asn392, Asn397, Asn406, Asn448, and Asn463. V5 stretches follow at residues 461–471 (NNNGSEIFRPG) and 463–471 (NGSEIFRPG). The interval 512-532 (AVGIGALFLGFLGAAGSTMGA) is fusion peptide. Positions 574 to 592 (KQLQARILAVERYLKDQQL) are immunosuppression. Cys598 and Cys604 are disulfide-bonded. N-linked (GlcNAc...) asparagine; by host glycans are attached at residues Asn611, Asn616, Asn624, Asn637, and Asn674. A coiled-coil region spans residues 633–667 (REINNYTSLIHSLIEESQNQQEKNEQELLELDKWA). The tract at residues 662-683 (ELDKWASLWNWFNITNWLWYIK) is MPER; binding to GalCer. The helical transmembrane segment at 685–705 (FIMIVGGLVGLRIVFAVLSIV) threads the bilayer. Residues 706–856 (NRVRQGHSPL…IRQGLERILL (151 aa)) are Cytoplasmic-facing. The tract at residues 715 to 742 (LSFQTHLPTPGGPDRPEGIEEEGGERDR) is disordered. S-palmitoyl cysteine; by host attachment occurs at residues Cys764 and Cys837. The short motif at 855 to 856 (LL) is the Di-leucine internalization motif element.

Belongs to the HIV-1 env protein family. As to quaternary structure, the mature envelope protein (Env) consists of a homotrimer of non-covalently associated gp120-gp41 heterodimers. The resulting complex protrudes from the virus surface as a spike. There seems to be as few as 10 spikes on the average virion. Interacts with host CD4, CCR5 and CXCR4. Gp120 also interacts with the C-type lectins CD209/DC-SIGN and CLEC4M/DC-SIGNR (collectively referred to as DC-SIGN(R)). Gp120 and gp41 interact with GalCer. Gp120 interacts with host ITGA4/ITGB7 complex; on CD4+ T-cells, this interaction results in rapid activation of integrin ITGAL/LFA-1, which facilitates efficient cell-to-cell spreading of HIV-1. Gp120 interacts with cell-associated heparan sulfate; this interaction increases virus infectivity on permissive cells and may be involved in infection of CD4- cells. The mature envelope protein (Env) consists of a homotrimer of non-covalently associated gp120-gp41 heterodimers. The resulting complex protrudes from the virus surface as a spike. There seems to be as few as 10 spikes on the average virion. Highly glycosylated by host. The high number of glycan on the protein is reffered to as 'glycan shield' because it contributes to hide protein sequence from adaptive immune system. Post-translationally, palmitoylation of the transmembrane protein and of Env polyprotein (prior to its proteolytic cleavage) is essential for their association with host cell membrane lipid rafts. Palmitoylation is therefore required for envelope trafficking to classical lipid rafts, but not for viral replication. In terms of processing, specific enzymatic cleavages in vivo yield mature proteins. Envelope glycoproteins are synthesized as an inactive precursor that is heavily N-glycosylated and processed likely by host cell furin in the Golgi to yield the mature SU and TM proteins. The cleavage site between SU and TM requires the minimal sequence [KR]-X-[KR]-R. About 2 of the 9 disulfide bonds of gp41 are reduced by P4HB/PDI, following binding to CD4 receptor.

The protein resides in the virion membrane. It is found in the host cell membrane. Its subcellular location is the host endosome membrane. Functionally, oligomerizes in the host endoplasmic reticulum into predominantly trimers. In a second time, gp160 transits in the host Golgi, where glycosylation is completed. The precursor is then proteolytically cleaved in the trans-Golgi and thereby activated by cellular furin or furin-like proteases to produce gp120 and gp41. Attaches the virus to the host lymphoid cell by binding to the primary receptor CD4. This interaction induces a structural rearrangement creating a high affinity binding site for a chemokine coreceptor like CXCR4 and/or CCR5. Acts as a ligand for CD209/DC-SIGN and CLEC4M/DC-SIGNR, which are respectively found on dendritic cells (DCs), and on endothelial cells of liver sinusoids and lymph node sinuses. These interactions allow capture of viral particles at mucosal surfaces by these cells and subsequent transmission to permissive cells. HIV subverts the migration properties of dendritic cells to gain access to CD4+ T-cells in lymph nodes. Virus transmission to permissive T-cells occurs either in trans (without DCs infection, through viral capture and transmission), or in cis (following DCs productive infection, through the usual CD4-gp120 interaction), thereby inducing a robust infection. In trans infection, bound virions remain infectious over days and it is proposed that they are not degraded, but protected in non-lysosomal acidic organelles within the DCs close to the cell membrane thus contributing to the viral infectious potential during DCs' migration from the periphery to the lymphoid tissues. On arrival at lymphoid tissues, intact virions recycle back to DCs' cell surface allowing virus transmission to CD4+ T-cells. Its function is as follows. Acts as a class I viral fusion protein. Under the current model, the protein has at least 3 conformational states: pre-fusion native state, pre-hairpin intermediate state, and post-fusion hairpin state. During fusion of viral and target intracellular membranes, the coiled coil regions (heptad repeats) assume a trimer-of-hairpins structure, positioning the fusion peptide in close proximity to the C-terminal region of the ectodomain. The formation of this structure appears to drive apposition and subsequent fusion of viral and target cell membranes. Complete fusion occurs in host cell endosomes and is dynamin-dependent, however some lipid transfer might occur at the plasma membrane. The virus undergoes clathrin-dependent internalization long before endosomal fusion, thus minimizing the surface exposure of conserved viral epitopes during fusion and reducing the efficacy of inhibitors targeting these epitopes. Membranes fusion leads to delivery of the nucleocapsid into the cytoplasm. The protein is Envelope glycoprotein gp160 of Homo sapiens (Human).